The chain runs to 258 residues: Serine protease VLSP-3 (258 aa).

A signal peptide spans Met-1–Ala-18. Positions Gln-19–Leu-24 are excised as a propeptide. Residues Val-25 to Ala-249 enclose the Peptidase S1 domain. 6 disulfide bridges follow: Cys-31-Cys-163, Cys-50-Cys-66, Cys-98-Cys-256, Cys-142-Cys-210, Cys-174-Cys-189, and Cys-200-Cys-225. Asn-44 carries an N-linked (GlcNAc...) asparagine glycan. His-65 acts as the Charge relay system in catalysis. N-linked (GlcNAc...) asparagine glycans are attached at residues Asn-79 and Asn-103. Asp-110 (charge relay system) is an active-site residue. Asn-154 and Asn-170 each carry an N-linked (GlcNAc...) asparagine glycan. Ser-204 functions as the Charge relay system in the catalytic mechanism. Asn-251 carries N-linked (GlcNAc...) asparagine glycosylation.

The protein belongs to the peptidase S1 family. Snake venom subfamily. As to quaternary structure, monomer. In terms of tissue distribution, expressed by the venom gland.

It localises to the secreted. Its function is as follows. Snake venom serine protease that may act in the hemostasis system of the prey. The sequence is that of Serine protease VLSP-3 from Macrovipera lebetinus (Levantine viper).